The primary structure comprises 132 residues: Acid shock protein (132 aa).

The signal sequence occupies residues 1–21 (MKKVLALVVAAAMGLSSAAFA). Positions 20–45 (FAAETTTSSAAPATATATTTKAAPAK) are enriched in low complexity. Residues 20–132 (FAAETTTSSA…AAKPAAQPAA (113 aa)) form a disordered region. Positions 22–90 (AETTTSSAAP…TTAPVEQKAQ (69 aa)) are excised as a propeptide. A compositionally biased stretch (basic residues) spans 62–71 (AAKKHHKKAV). Low complexity-rich tracts occupy residues 76-90 (AAPATTTAPVEQKAQ) and 100-109 (AKPAVAQKAQ). The span at 110-119 (AAKKHHKKAV) shows a compositional bias: basic residues.

Belongs to the Asr family. In terms of processing, proteolytic processing gives rise to the active protein.

The protein localises to the periplasm. Its function is as follows. Required for growth and/or survival at acidic conditions. This is Acid shock protein from Enterobacter sp. (strain 638).